Reading from the N-terminus, the 507-residue chain is Maturase K (507 aa).

It belongs to the intron maturase 2 family. MatK subfamily.

The protein localises to the plastid. The protein resides in the chloroplast. In terms of biological role, usually encoded in the trnK tRNA gene intron. Probably assists in splicing its own and other chloroplast group II introns. This is Maturase K from Nymphaea alba (White water-lily).